The sequence spans 655 residues: Sphingomyelin phosphodiesterase 3 (655 aa).

Residues 1–10 lie on the Cytoplasmic side of the membrane; sequence MVLYTTPFPN. The segment at residues 11–31 is an intramembrane region (helical); sequence SCLSALHAVSWALIFPCYWLV. At 32-64 the chain is on the cytoplasmic side; the sequence is DRLVASFIPTTYEKRQRADDPCYLQLFCTVLFT. 2 S-palmitoyl cysteine lipidation sites follow: C53 and C59. The segment at residues 65–85 is an intramembrane region (helical); that stretch reads PVYLALLVAALPFAFLGFIFW. The Cytoplasmic segment spans residues 86–655; sequence SPLQSARRPY…LMVSAGEEEA (570 aa). S178 is modified (phosphoserine). Disordered stretches follow at residues 209–237 and 250–320; these read VEYKGDGGRHPSDEAANGPASGEQADGSL and GGRA…SNSK. Positions 211–221 are enriched in basic and acidic residues; the sequence is YKGDGGRHPSD. S289 is subject to Phosphoserine. E362 lines the Mg(2+) pocket. 2 S-palmitoyl cysteine lipidation sites follow: C395 and C396. The active-site Proton acceptor is the H639.

This sequence belongs to the neutral sphingomyelinase family. It depends on Mg(2+) as a cofactor. Palmitoylated, palmitoylation-deficient proteins are targeted for lysosomal degradation. As to expression, in brain sections, it is restricted to neurons and especially prominent in large cells, including Purkinje cells, pyramidal cells, neurons of the dentate gyrus granular layer, and neurons in the pontine nuclei. Also present in the hypothalamic nuclei, neurons in the piriform cortex, and nuclei of the brainstem (at protein level). Mainly expressed in brain and jejunum. Weakly or not expressed in heart, spleen, lung, liver, kidney and testis.

The protein localises to the golgi apparatus membrane. It localises to the cell membrane. The enzyme catalyses a sphingomyelin + H2O = phosphocholine + an N-acylsphing-4-enine + H(+). The catalysed reaction is N-(15Z-tetracosenoyl)sphing-4-enine-1-phosphocholine + H2O = N-(15Z-tetracosenoyl)-sphing-4-enine + phosphocholine + H(+). It catalyses the reaction N-(tetracosanoyl)-sphing-4-enine-1-phosphocholine + H2O = N-tetracosanoyl-sphing-4-enine + phosphocholine + H(+). It carries out the reaction an N-(acyl)-sphingosylphosphocholine + H2O = an N-acyl-sphingoid base + phosphocholine + H(+). The enzyme catalyses 1-hexadecanoyl-sn-glycero-3-phosphocholine + H2O = 1-hexadecanoyl-sn-glycerol + phosphocholine + H(+). The catalysed reaction is 1-O-octadecyl-sn-glycero-3-phosphocholine + H2O = 1-O-octadecyl-sn-glycerol + phosphocholine + H(+). It catalyses the reaction a sphingosylphosphocholine + H2O = a sphingoid base + phosphocholine + H(+). It carries out the reaction N-(hexadecanoyl)-sphing-4-enine-1-phosphocholine + H2O = N-hexadecanoylsphing-4-enine + phosphocholine + H(+). Its pathway is lipid metabolism; sphingolipid metabolism. Inhibited by nSMase inhibitor GW4869. Binding of anionic phospholipids (APLs) such as phosphatidylserine (PS) and phosphatidic acid (PA) increases enzymatic activity. Its function is as follows. Catalyzes the hydrolysis of sphingomyelin to form ceramide and phosphocholine. Ceramide mediates numerous cellular functions, such as apoptosis and growth arrest, and is capable of regulating these 2 cellular events independently. Also hydrolyzes sphingosylphosphocholine. Binds to anionic phospholipids (APLs) such as phosphatidylserine (PS) and phosphatidic acid (PA) that modulate enzymatic activity and subcellular location. Regulates the cell cycle by acting as a growth suppressor in confluent cells. Acts as a regulator of postnatal development and participates in bone and dentin mineralization. May be involved in IL-1-beta-induced JNK activation in hepatocytes. May act as a mediator in transcriptional regulation of NOS2/iNOS via the NF-kappa-B activation under inflammatory conditions. The sequence is that of Sphingomyelin phosphodiesterase 3 from Rattus norvegicus (Rat).